A 369-amino-acid chain; its full sequence is D-glucosaminate-6-phosphate ammonia lyase (369 aa).

Position 213 is an N6-(pyridoxal phosphate)lysine (K213).

This sequence belongs to the SelA family. It depends on pyridoxal 5'-phosphate as a cofactor.

The catalysed reaction is 2-amino-2-deoxy-D-gluconate 6-phosphate = 2-dehydro-3-deoxy-6-phospho-D-gluconate + NH4(+). Its function is as follows. Involved in the catabolism of D-glucosaminate. Catalyzes the conversion of D-glucosaminate 6-phosphate to yield keto-3-deoxygluconate 6-phosphate (KDGP). This Salmonella typhimurium (strain 14028s / SGSC 2262) protein is D-glucosaminate-6-phosphate ammonia lyase.